Here is a 319-residue protein sequence, read N- to C-terminus: Probable NAD(P)H-dependent D-xylose reductase xyl1 (319 aa).

Tyrosine 50 acts as the Proton donor in catalysis. Histidine 112 lines the substrate pocket. Residues 166 to 167, 215 to 224, and 271 to 281 each bind NAD(+); these read SN, SSFGPLSFLE, and KSNNPTRLSQN.

Belongs to the aldo/keto reductase family.

It carries out the reaction xylitol + NAD(+) = D-xylose + NADH + H(+). It catalyses the reaction xylitol + NADP(+) = D-xylose + NADPH + H(+). It participates in carbohydrate metabolism; D-xylose degradation. Its function is as follows. Catalyzes the initial reaction in the xylose utilization pathway by reducing D-xylose into xylitol. Xylose is a major component of hemicelluloses such as xylan. Most fungi utilize D-xylose via three enzymatic reactions, xylose reductase (XR), xylitol dehydrogenase (XDH), and xylulokinase, to form xylulose 5-phosphate, which enters pentose phosphate pathway. The sequence is that of Probable NAD(P)H-dependent D-xylose reductase xyl1 (xyl1) from Aspergillus oryzae (strain ATCC 42149 / RIB 40) (Yellow koji mold).